Reading from the N-terminus, the 453-residue chain is Growth/differentiation factor 9 (453 aa).

The first 25 residues, 1–25, serve as a signal peptide directing secretion; it reads MALPNKFFLWFCCFAWLCFPISLDS. A propeptide spanning residues 26–318 is cleaved from the precursor; sequence QPSRGEAQIV…EGVRLSRHRR (293 aa). 5 N-linked (GlcNAc...) asparagine glycosylation sites follow: Asn-106, Asn-163, Asn-236, Asn-255, and Asn-269. The tract at residues 281-300 is disordered; sequence SLHPKRKPSQDPDQKRGLSA. Asn-337 is a glycosylation site (N-linked (GlcNAc...) asparagine). 3 disulfide bridges follow: Cys-352–Cys-418, Cys-381–Cys-450, and Cys-385–Cys-452.

This sequence belongs to the TGF-beta family. As to quaternary structure, homodimer or heterodimer (Potential). But, in contrast to other members of this family, cannot be disulfide-linked. Post-translationally, phosphorylated; phosphorylation is critical for GDF9 function.

It is found in the secreted. Required for ovarian folliculogenesis. The polypeptide is Growth/differentiation factor 9 (GDF9) (Bos taurus (Bovine)).